A 248-amino-acid chain; its full sequence is tRNA (guanine-N(1)-)-methyltransferase (248 aa).

S-adenosyl-L-methionine-binding positions include Gly113 and 133 to 138; that span reads VGDYVL.

Belongs to the RNA methyltransferase TrmD family. As to quaternary structure, homodimer.

The protein resides in the cytoplasm. The catalysed reaction is guanosine(37) in tRNA + S-adenosyl-L-methionine = N(1)-methylguanosine(37) in tRNA + S-adenosyl-L-homocysteine + H(+). In terms of biological role, specifically methylates guanosine-37 in various tRNAs. The polypeptide is tRNA (guanine-N(1)-)-methyltransferase (Shewanella oneidensis (strain ATCC 700550 / JCM 31522 / CIP 106686 / LMG 19005 / NCIMB 14063 / MR-1)).